The primary structure comprises 332 residues: tRNA-dihydrouridine(20/20a) synthase (332 aa).

FMN is bound by residues 19–21 (PML) and Gln71. Cys101 functions as the Proton donor in the catalytic mechanism. Residues Lys140, His173, 213 to 215 (NGG), and 235 to 236 (GR) each bind FMN.

Belongs to the Dus family. DusA subfamily. FMN is required as a cofactor.

The catalysed reaction is 5,6-dihydrouridine(20) in tRNA + NADP(+) = uridine(20) in tRNA + NADPH + H(+). It catalyses the reaction 5,6-dihydrouridine(20) in tRNA + NAD(+) = uridine(20) in tRNA + NADH + H(+). It carries out the reaction 5,6-dihydrouridine(20a) in tRNA + NADP(+) = uridine(20a) in tRNA + NADPH + H(+). The enzyme catalyses 5,6-dihydrouridine(20a) in tRNA + NAD(+) = uridine(20a) in tRNA + NADH + H(+). In terms of biological role, catalyzes the synthesis of 5,6-dihydrouridine (D), a modified base found in the D-loop of most tRNAs, via the reduction of the C5-C6 double bond in target uridines. Specifically modifies U20 and U20a in tRNAs. In Salmonella typhi, this protein is tRNA-dihydrouridine(20/20a) synthase.